Here is a 329-residue protein sequence, read N- to C-terminus: GTP 3',8-cyclase (329 aa).

Residues 1–229 (MNPVDYLRIS…ESTIKGNGPA (229 aa)) form the Radical SAM core domain. A GTP-binding site is contributed by Arg8. [4Fe-4S] cluster-binding residues include Cys15 and Cys19. Tyr21 serves as a coordination point for S-adenosyl-L-methionine. Residue Cys22 participates in [4Fe-4S] cluster binding. Arg60 provides a ligand contact to GTP. Position 64 (Gly64) interacts with S-adenosyl-L-methionine. Thr91 contributes to the GTP binding site. Ser115 lines the S-adenosyl-L-methionine pocket. Lys155 lines the GTP pocket. Met189 provides a ligand contact to S-adenosyl-L-methionine. Cys252 and Cys255 together coordinate [4Fe-4S] cluster. A GTP-binding site is contributed by 257 to 259 (RMR). Cys269 contacts [4Fe-4S] cluster.

This sequence belongs to the radical SAM superfamily. MoaA family. As to quaternary structure, monomer and homodimer. Requires [4Fe-4S] cluster as cofactor.

The catalysed reaction is GTP + AH2 + S-adenosyl-L-methionine = (8S)-3',8-cyclo-7,8-dihydroguanosine 5'-triphosphate + 5'-deoxyadenosine + L-methionine + A + H(+). It functions in the pathway cofactor biosynthesis; molybdopterin biosynthesis. In terms of biological role, catalyzes the cyclization of GTP to (8S)-3',8-cyclo-7,8-dihydroguanosine 5'-triphosphate. In Rippkaea orientalis (strain PCC 8801 / RF-1) (Cyanothece sp. (strain PCC 8801)), this protein is GTP 3',8-cyclase.